The sequence spans 78 residues: Large ribosomal subunit protein bL28 (78 aa).

The disordered stretch occupies residues 1 to 22 (MSRVCQVTGKRPMSGNNRSHAM).

The protein belongs to the bacterial ribosomal protein bL28 family.

The sequence is that of Large ribosomal subunit protein bL28 from Yersinia pseudotuberculosis serotype O:1b (strain IP 31758).